A 198-amino-acid chain; its full sequence is Recombination protein RecR (198 aa).

Residues 57-72 (CSECQTLTDKDPCAVC) form a C4-type zinc finger. Residues 80–175 (RIICVVEGVP…KVTRIAQGIP (96 aa)) enclose the Toprim domain.

This sequence belongs to the RecR family.

Functionally, may play a role in DNA repair. It seems to be involved in an RecBC-independent recombinational process of DNA repair. It may act with RecF and RecO. The protein is Recombination protein RecR of Anaeromyxobacter sp. (strain Fw109-5).